The primary structure comprises 55 residues: Large ribosomal subunit protein bL33 (55 aa).

This sequence belongs to the bacterial ribosomal protein bL33 family.

This chain is Large ribosomal subunit protein bL33, found in Agrobacterium fabrum (strain C58 / ATCC 33970) (Agrobacterium tumefaciens (strain C58)).